A 215-amino-acid chain; its full sequence is MSEAKRLAAEKAIDYVEDGMIVGVGTGSTVAYFIDALGHIGHRIKGAVSSSEQSTARLRQHGIEVLDLNHTGNLSLYVDGADECDPNRCLIKGGGAALTREKIIAEASERFICIVDPSKQVPVLGKFPLPVEVIPMARSLVARQILALTGGQPVWRDVVLTDNGNVVLDVHNLQITDPVALERSLNQIPGVVCVGLFARRPADVVIVGGEPPRVL.

Substrate-binding positions include 26–29 (TGST), 79–82 (DGAD), and 92–95 (KGGG). Glu-101 (proton acceptor) is an active-site residue. Position 119 (Lys-119) interacts with substrate.

The protein belongs to the ribose 5-phosphate isomerase family. As to quaternary structure, homodimer.

The enzyme catalyses aldehydo-D-ribose 5-phosphate = D-ribulose 5-phosphate. It functions in the pathway carbohydrate degradation; pentose phosphate pathway; D-ribose 5-phosphate from D-ribulose 5-phosphate (non-oxidative stage): step 1/1. Catalyzes the reversible conversion of ribose-5-phosphate to ribulose 5-phosphate. This is Ribose-5-phosphate isomerase A from Xanthomonas oryzae pv. oryzae (strain PXO99A).